A 537-amino-acid polypeptide reads, in one-letter code: MNTKYIFVTGGVVSSLGKGITAASLGRLLKNRGLKVSIQKFDPYINIDPGTMSPYQHGEVFVTDDGAETDLDLGHYERFIDESLSRNNNITTGKIYWSVISKERKGDYLGSTVQVIPHITNEIKSRVYKVAEGKNIDVVITEIGGTVGDIESLPFLEAIRQIKYDVGVENVCFIHVTLVPYLKKSGELKTKPTQHSVKELRSIGIQPDIIVCRSEKLISNDLKEKIGLFCNVERDSVIQNLDAENLYEVPLMLHREGLDNLVCKKLKLQCNETDNTEWIIMVDKIKKLSKNVNIALVGKYVELHDAYISVVEALSHGGYANDANVNIKWLNSEDITKDNIEEYLKDIDGILIPGGFGDRGIEGKILAAGWARKNKIPFFGICLGMQCALIEFARSVLKYEGAHSSEINPETKYPVIDLMPDQKDIDEKGGTMRLGKYPCKLLKNSISFKAYGEDVIYERHRHRYEFNNIYRDELIESGLVLSGTSPDSKLVEIIEIKEHPWFIGVQFHPELKSRPNRPHPLFRDFIKASLNSKHKFD.

Residues 1–268 (MNTKYIFVTG…DNLVCKKLKL (268 aa)) form an amidoligase domain region. Residue Ser14 coordinates CTP. Ser14 serves as a coordination point for UTP. 15 to 20 (SLGKGI) serves as a coordination point for ATP. Position 55 (Tyr55) interacts with L-glutamine. Asp72 contributes to the ATP binding site. Asp72 and Glu142 together coordinate Mg(2+). CTP-binding positions include 149 to 151 (DIE), 189 to 194 (KTKPTQ), and Lys225. UTP is bound by residues 189 to 194 (KTKPTQ) and Lys225. The Glutamine amidotransferase type-1 domain maps to 293-535 (NIALVGKYVE…IKASLNSKHK (243 aa)). Gly355 is a binding site for L-glutamine. The Nucleophile; for glutamine hydrolysis role is filled by Cys382. Residues 383–386 (LGMQ), Glu406, and Arg463 contribute to the L-glutamine site. Residues His508 and Glu510 contribute to the active site.

This sequence belongs to the CTP synthase family. Homotetramer.

The catalysed reaction is UTP + L-glutamine + ATP + H2O = CTP + L-glutamate + ADP + phosphate + 2 H(+). The enzyme catalyses L-glutamine + H2O = L-glutamate + NH4(+). It carries out the reaction UTP + NH4(+) + ATP = CTP + ADP + phosphate + 2 H(+). Its pathway is pyrimidine metabolism; CTP biosynthesis via de novo pathway; CTP from UDP: step 2/2. Its activity is regulated as follows. Allosterically activated by GTP, when glutamine is the substrate; GTP has no effect on the reaction when ammonia is the substrate. The allosteric effector GTP functions by stabilizing the protein conformation that binds the tetrahedral intermediate(s) formed during glutamine hydrolysis. Inhibited by the product CTP, via allosteric rather than competitive inhibition. Functionally, catalyzes the ATP-dependent amination of UTP to CTP with either L-glutamine or ammonia as the source of nitrogen. Regulates intracellular CTP levels through interactions with the four ribonucleotide triphosphates. The protein is CTP synthase of Clostridium kluyveri (strain ATCC 8527 / DSM 555 / NBRC 12016 / NCIMB 10680 / K1).